Here is a 198-residue protein sequence, read N- to C-terminus: Ribosomal RNA small subunit methyltransferase G (198 aa).

S-adenosyl-L-methionine contacts are provided by residues G74, F79, 123–124 (IQ), and R136.

The protein belongs to the methyltransferase superfamily. RNA methyltransferase RsmG family.

The protein localises to the cytoplasm. The enzyme catalyses guanosine(527) in 16S rRNA + S-adenosyl-L-methionine = N(7)-methylguanosine(527) in 16S rRNA + S-adenosyl-L-homocysteine. Its function is as follows. Specifically methylates the N7 position of guanine in position 527 of 16S rRNA. The polypeptide is Ribosomal RNA small subunit methyltransferase G (Orientia tsutsugamushi (strain Boryong) (Rickettsia tsutsugamushi)).